The sequence spans 130 residues: Holo-[acyl-carrier-protein] synthase (130 aa).

Asp-9 and Glu-58 together coordinate Mg(2+).

Belongs to the P-Pant transferase superfamily. AcpS family. The cofactor is Mg(2+).

It is found in the cytoplasm. The catalysed reaction is apo-[ACP] + CoA = holo-[ACP] + adenosine 3',5'-bisphosphate + H(+). Functionally, transfers the 4'-phosphopantetheine moiety from coenzyme A to a Ser of acyl-carrier-protein. The sequence is that of Holo-[acyl-carrier-protein] synthase from Mycobacterium leprae (strain Br4923).